Here is a 90-residue protein sequence, read N- to C-terminus: Probable Fe(2+)-trafficking protein (90 aa).

The protein belongs to the Fe(2+)-trafficking protein family.

Functionally, could be a mediator in iron transactions between iron acquisition and iron-requiring processes, such as synthesis and/or repair of Fe-S clusters in biosynthetic enzymes. This is Probable Fe(2+)-trafficking protein from Pseudomonas syringae pv. tomato (strain ATCC BAA-871 / DC3000).